Reading from the N-terminus, the 364-residue chain is Ribosomal RNA large subunit methyltransferase F (364 aa).

The disordered stretch occupies residues 1-30; sequence MTNKRKSAKPLEPAKRAPKPRTKKSRDLSA.

It belongs to the methyltransferase superfamily. METTL16/RlmF family.

The protein localises to the cytoplasm. The enzyme catalyses adenosine(1618) in 23S rRNA + S-adenosyl-L-methionine = N(6)-methyladenosine(1618) in 23S rRNA + S-adenosyl-L-homocysteine + H(+). Functionally, specifically methylates the adenine in position 1618 of 23S rRNA. The sequence is that of Ribosomal RNA large subunit methyltransferase F from Vibrio vulnificus (strain CMCP6).